Consider the following 250-residue polypeptide: Small ribosomal subunit protein uS2 (250 aa).

The disordered stretch occupies residues 226–250; the sequence is DQQNRQELGEDLGAAVEPAAEEALA. Residues 239-250 show a composition bias toward low complexity; it reads AAVEPAAEEALA.

Belongs to the universal ribosomal protein uS2 family.

This is Small ribosomal subunit protein uS2 (rpsB) from Zymomonas mobilis subsp. mobilis (strain ATCC 31821 / ZM4 / CP4).